The primary structure comprises 259 residues: 5'-nucleotidase SurE (259 aa).

The a divalent metal cation site is built by Asp-8, Asp-9, Ser-41, and Asn-93.

Belongs to the SurE nucleotidase family. A divalent metal cation serves as cofactor.

The protein resides in the cytoplasm. The enzyme catalyses a ribonucleoside 5'-phosphate + H2O = a ribonucleoside + phosphate. In terms of biological role, nucleotidase that shows phosphatase activity on nucleoside 5'-monophosphates. In Verminephrobacter eiseniae (strain EF01-2), this protein is 5'-nucleotidase SurE.